Reading from the N-terminus, the 256-residue chain is Imidazole glycerol phosphate synthase subunit HisF (256 aa).

Catalysis depends on residues aspartate 12 and aspartate 131.

The protein belongs to the HisA/HisF family. As to quaternary structure, heterodimer of HisH and HisF.

It localises to the cytoplasm. The catalysed reaction is 5-[(5-phospho-1-deoxy-D-ribulos-1-ylimino)methylamino]-1-(5-phospho-beta-D-ribosyl)imidazole-4-carboxamide + L-glutamine = D-erythro-1-(imidazol-4-yl)glycerol 3-phosphate + 5-amino-1-(5-phospho-beta-D-ribosyl)imidazole-4-carboxamide + L-glutamate + H(+). It functions in the pathway amino-acid biosynthesis; L-histidine biosynthesis; L-histidine from 5-phospho-alpha-D-ribose 1-diphosphate: step 5/9. In terms of biological role, IGPS catalyzes the conversion of PRFAR and glutamine to IGP, AICAR and glutamate. The HisF subunit catalyzes the cyclization activity that produces IGP and AICAR from PRFAR using the ammonia provided by the HisH subunit. This chain is Imidazole glycerol phosphate synthase subunit HisF, found in Azotobacter vinelandii (strain DJ / ATCC BAA-1303).